A 217-amino-acid polypeptide reads, in one-letter code: 2-C-methyl-D-erythritol 4-phosphate cytidylyltransferase (217 aa).

It belongs to the IspD/TarI cytidylyltransferase family. IspD subfamily.

It catalyses the reaction 2-C-methyl-D-erythritol 4-phosphate + CTP + H(+) = 4-CDP-2-C-methyl-D-erythritol + diphosphate. The protein operates within isoprenoid biosynthesis; isopentenyl diphosphate biosynthesis via DXP pathway; isopentenyl diphosphate from 1-deoxy-D-xylulose 5-phosphate: step 2/6. In terms of biological role, catalyzes the formation of 4-diphosphocytidyl-2-C-methyl-D-erythritol from CTP and 2-C-methyl-D-erythritol 4-phosphate (MEP). The polypeptide is 2-C-methyl-D-erythritol 4-phosphate cytidylyltransferase (Chlamydia abortus (strain DSM 27085 / S26/3) (Chlamydophila abortus)).